The chain runs to 880 residues: MSTVEPNVYDPHQVETSAQQFWDATRAFQVDESSEKPKFYCLSMLPYPSGALHMGHVRNYTISDVVSRYKRMTGHNVLQPMGWDAFGLPAENAAIKNKTAPAKWTYANIAHMRAQLKSLGYAIDWSREFATCTPDYYVHEQRMFTRLMRKGLAYRRNAVVNWDPIDQTVLANEQVIDGRGWRSGAVVEKREIPQWFLRITDYAQELLDGLDQLDGWPDSVKTMQRNWIGRSEGLEIQFDVRDTNGAALDPLRVFTTRPDTLMGVTFVSIAAEHPLALHAAKSNPELAALLETLKHGGVSEAELETQEKRGMATGLTAVHPISGEQVPVWVANFVLMGYGTGAVMAVPGHDQRDFEFANKYGLPIVQVVKLREPRNDDEQRWDATEWRDWYTDKSRELELINSAEFDGLDFGGAFEALAERFERKGQGQRRVNYRLRDWGVSRQRYWGCPIPVIYCPKCGAVPVPEDQLPVVLPENVEFACTGSPIKTDPTWRQTTCPDCGGPAERETDTFDTFMESSWYVARYTSPNAREMVDRRANYWMPADLYVGGIEHAILHLMYFRFYHKLMRDARLVDSDEPVTNLLTQGMVIADTFYRDADNGGKDWINPADVEIQRDERGRVTGAVLIADGQPVHIGGTEKMSKSKNNGVDPQSMVAKYGADTVRLFSMFAAPPEQSLEWNEAGVDGMARFMRRLWAQVHKHVGEGAAVALDVAALSAEQKAIRRKTHETIGKVSDDYGRRHSFNTAIAAVMELSNALAKFDDASDQGRAVRQEALEAMVLLLNPITPHASHALWQVLGRGETLLENVAFPQADVSALVRDALTLAVQINGKLRGTIDVAADAAREQIEALAQAEPNAAKFLDGLSVRKIIIVPGKIVNIVAG.

The 'HIGH' region motif lies at 46–56; sequence PYPSGALHMGH. The 'KMSKS' region signature appears at 638-642; sequence KMSKS. Lysine 641 is a binding site for ATP.

This sequence belongs to the class-I aminoacyl-tRNA synthetase family.

It is found in the cytoplasm. It carries out the reaction tRNA(Leu) + L-leucine + ATP = L-leucyl-tRNA(Leu) + AMP + diphosphate. In Xanthomonas oryzae pv. oryzae (strain MAFF 311018), this protein is Leucine--tRNA ligase.